We begin with the raw amino-acid sequence, 371 residues long: Anhydro-N-acetylmuramic acid kinase (371 aa).

9-16 is a binding site for ATP; that stretch reads GTSLDAVD.

It belongs to the anhydro-N-acetylmuramic acid kinase family.

The catalysed reaction is 1,6-anhydro-N-acetyl-beta-muramate + ATP + H2O = N-acetyl-D-muramate 6-phosphate + ADP + H(+). The protein operates within amino-sugar metabolism; 1,6-anhydro-N-acetylmuramate degradation. It functions in the pathway cell wall biogenesis; peptidoglycan recycling. Its function is as follows. Catalyzes the specific phosphorylation of 1,6-anhydro-N-acetylmuramic acid (anhMurNAc) with the simultaneous cleavage of the 1,6-anhydro ring, generating MurNAc-6-P. Is required for the utilization of anhMurNAc either imported from the medium or derived from its own cell wall murein, and thus plays a role in cell wall recycling. The protein is Anhydro-N-acetylmuramic acid kinase of Caulobacter vibrioides (strain ATCC 19089 / CIP 103742 / CB 15) (Caulobacter crescentus).